The chain runs to 318 residues: Protein-L-histidine N-pros-methyltransferase (318 aa).

The first 18 residues, 1–18 (MRLLAGWLCLSLASVWLA), serve as a signal peptide directing secretion. Asn35 is a glycosylation site (N-linked (GlcNAc...) asparagine). Positions 174, 210, and 295 each coordinate S-adenosyl-L-homocysteine.

The protein belongs to the METTL9 family. Expressed in liver, colon, small intestine, skin, kidney and to a lesser extent in spleen, lung, thymus and stomach. Not detected in fibroblast and endothelial cells.

The protein localises to the endoplasmic reticulum. The protein resides in the mitochondrion. It catalyses the reaction L-histidyl-[protein] + S-adenosyl-L-methionine = N(pros)-methyl-L-histidyl-[protein] + S-adenosyl-L-homocysteine + H(+). Protein-histidine N-methyltransferase that specifically catalyzes 1-methylhistidine (pros-methylhistidine) methylation of target proteins. Specifically methylates the second His of proteins with a His-x-His (HxH) motif (where 'x' is preferably a small amino acid), while exploiting the first one as a recognition signature. Catalyzes methylation of target proteins such as S100A9, NDUFB3, SLC39A5, SLC39A7, ARMC6 and DNAJB12; 1-methylhistidine modification may affect the binding of zinc and other metals to its target proteins. Constitutes the main methyltransferase for the 1-methylhistidine modification in cell. The protein is Protein-L-histidine N-pros-methyltransferase of Mus musculus (Mouse).